The primary structure comprises 87 residues: Protein anon-73B1 (87 aa).

A helical transmembrane segment spans residues 25–47 (LLIRYGLYVGALFQFVCISAAVL). A disordered region spans residues 52–87 (PDVNSNPETGEVTEREGEPVRTRLHKIRKLEKKKRR). Positions 63–72 (VTEREGEPVR) are enriched in basic and acidic residues. The span at 73 to 87 (TRLHKIRKLEKKKRR) shows a compositional bias: basic residues.

The protein belongs to the UPF0239 family.

The protein localises to the membrane. The polypeptide is Protein anon-73B1 (Drosophila erecta (Fruit fly)).